The primary structure comprises 211 residues: ATP-dependent dethiobiotin synthetase BioD (211 aa).

Gly-10–Tyr-15 is an ATP binding site. Mg(2+) is bound at residue Thr-14. Lys-35 is an active-site residue. Ser-39 lines the substrate pocket. ATP-binding positions include Asp-44, Glu-105–Gly-108, and Asn-165–Cys-166. Asp-44 and Glu-105 together coordinate Mg(2+).

Belongs to the dethiobiotin synthetase family. Homodimer. It depends on Mg(2+) as a cofactor.

The protein resides in the cytoplasm. The catalysed reaction is (7R,8S)-7,8-diammoniononanoate + CO2 + ATP = (4R,5S)-dethiobiotin + ADP + phosphate + 3 H(+). It functions in the pathway cofactor biosynthesis; biotin biosynthesis; biotin from 7,8-diaminononanoate: step 1/2. Its function is as follows. Catalyzes a mechanistically unusual reaction, the ATP-dependent insertion of CO2 between the N7 and N8 nitrogen atoms of 7,8-diaminopelargonic acid (DAPA, also called 7,8-diammoniononanoate) to form a ureido ring. The polypeptide is ATP-dependent dethiobiotin synthetase BioD (Methanococcus vannielii (strain ATCC 35089 / DSM 1224 / JCM 13029 / OCM 148 / SB)).